The chain runs to 290 residues: Bifunctional protein FolD (290 aa).

NADP(+) contacts are provided by residues 166 to 168 and I232; that span reads GAS.

It belongs to the tetrahydrofolate dehydrogenase/cyclohydrolase family. Homodimer.

It carries out the reaction (6R)-5,10-methylene-5,6,7,8-tetrahydrofolate + NADP(+) = (6R)-5,10-methenyltetrahydrofolate + NADPH. It catalyses the reaction (6R)-5,10-methenyltetrahydrofolate + H2O = (6R)-10-formyltetrahydrofolate + H(+). It functions in the pathway one-carbon metabolism; tetrahydrofolate interconversion. In terms of biological role, catalyzes the oxidation of 5,10-methylenetetrahydrofolate to 5,10-methenyltetrahydrofolate and then the hydrolysis of 5,10-methenyltetrahydrofolate to 10-formyltetrahydrofolate. The polypeptide is Bifunctional protein FolD (Proteus mirabilis (strain HI4320)).